A 313-amino-acid polypeptide reads, in one-letter code: ADP-L-glycero-D-manno-heptose-6-epimerase (313 aa).

Residues 10-11 (MI), 31-32 (DN), lysine 38, arginine 53, 75-79 (EGACS), and asparagine 92 contribute to the NADP(+) site. The Proton acceptor role is filled by tyrosine 139. NADP(+) is bound at residue lysine 143. Asparagine 174 provides a ligand contact to substrate. Residues valine 175 and lysine 183 each contribute to the NADP(+) site. Catalysis depends on lysine 183, which acts as the Proton acceptor. Residues serine 185, histidine 192, 206 to 209 (FAGS), arginine 214, and tyrosine 277 contribute to the substrate site.

The protein belongs to the NAD(P)-dependent epimerase/dehydratase family. HldD subfamily. In terms of assembly, homopentamer. Requires NADP(+) as cofactor.

The catalysed reaction is ADP-D-glycero-beta-D-manno-heptose = ADP-L-glycero-beta-D-manno-heptose. It participates in nucleotide-sugar biosynthesis; ADP-L-glycero-beta-D-manno-heptose biosynthesis; ADP-L-glycero-beta-D-manno-heptose from D-glycero-beta-D-manno-heptose 7-phosphate: step 4/4. Its pathway is bacterial outer membrane biogenesis; LPS core biosynthesis. Its function is as follows. Catalyzes the interconversion between ADP-D-glycero-beta-D-manno-heptose and ADP-L-glycero-beta-D-manno-heptose via an epimerization at carbon 6 of the heptose. The polypeptide is ADP-L-glycero-D-manno-heptose-6-epimerase (Vibrio vulnificus (strain YJ016)).